The sequence spans 238 residues: uncharacterized protein (238 aa).

It belongs to the HyuE racemase family.

This is an uncharacterized protein from Schizosaccharomyces pombe (strain 972 / ATCC 24843) (Fission yeast).